The chain runs to 441 residues: Ribulose bisphosphate carboxylase/oxygenase activase, chloroplastic (441 aa).

167-174 (VWGGKGQG) contacts ATP.

This sequence belongs to the RuBisCO activase family.

It localises to the plastid. The protein resides in the chloroplast stroma. Activation of RuBisCO (ribulose-1,5-bisphosphate carboxylase/oxygenase; EC 4.1.1.39) involves the ATP-dependent carboxylation of the epsilon-amino group of lysine leading to a carbamate structure. The polypeptide is Ribulose bisphosphate carboxylase/oxygenase activase, chloroplastic (RCA1) (Phaseolus vulgaris (Kidney bean)).